A 289-amino-acid chain; its full sequence is NFU1 iron-sulfur cluster scaffold homolog, mitochondrial (289 aa).

Residues 1–56 constitute a mitochondrion transit peptide; it reads MAKLISYAKGGFLRNTRLTSRAVPQVYQHATSSRGFVHLTSSVAQSSAIHVSTPST. A nifU region spans residues 183–251; the sequence is IKELLDTRIR…IPEVESVEQV (69 aa). Residues C220 and C223 each coordinate [4Fe-4S] cluster. Residues 267-289 are disordered; that stretch reads ERNLKQKDTSSTAPVGIGGGPAN.

The protein belongs to the NifU family.

Its subcellular location is the mitochondrion. Molecular scaffold for [Fe-S] cluster assembly of mitochondrial iron-sulfur proteins. The polypeptide is NFU1 iron-sulfur cluster scaffold homolog, mitochondrial (Drosophila willistoni (Fruit fly)).